A 352-amino-acid chain; its full sequence is Ion-translocating oxidoreductase complex subunit D (352 aa).

5 helical membrane-spanning segments follow: residues 20–40 (IMLL…WFFG), 42–62 (GTLV…ALVL), 78–109 (ALLT…VIIA), 123–143 (PAMI…TSWL), and 148–168 (IAVN…GHTA). T187 is modified (FMN phosphoryl threonine). 5 helical membrane passes run 214–234 (ILAG…GVWL), 242–262 (WHIP…GWLF), 267–287 (LAAP…FFIL), 301–321 (LIFG…GGYP), and 322–342 (DGVA…DYYT).

This sequence belongs to the NqrB/RnfD family. In terms of assembly, the complex is composed of six subunits: RsxA, RsxB, RsxC, RsxD, RsxE and RsxG. The cofactor is FMN.

The protein localises to the cell inner membrane. Its function is as follows. Part of a membrane-bound complex that couples electron transfer with translocation of ions across the membrane. Required to maintain the reduced state of SoxR. Probably transfers electron from NAD(P)H to SoxR. This is Ion-translocating oxidoreductase complex subunit D from Escherichia coli (strain K12).